A 470-amino-acid polypeptide reads, in one-letter code: Choline/ethanolamine transporter flvcr2a (470 aa).

Residues 1–23 (MCDKADNHIDVQPEGNLEVSSVS) lie on the Cytoplasmic side of the membrane. The chain crosses the membrane as a helical span at residues 24–48 (STRLYRRRWVILLLFSSYSLCNAFQ). The choline site is built by Asn-45, Ala-46, and Trp-49. The Extracellular segment spans residues 49-66 (WIQYGIINNIFMKFYQVS). Residues 67-94 (SFAVDWLSMVYMLTYIPFIFPVTWLLER) traverse the membrane as a helical segment. Over 95–96 (KG) the chain is Cytoplasmic. The chain crosses the membrane as a helical span at residues 97–116 (LRVVALLAASINCAGTWIKV). Over 117–123 (ASVQPSL) the chain is Extracellular. The chain crosses the membrane as a helical span at residues 124 to 152 (FWVTMLGQFACSCAQVFILGMPSQVASVW). Residues Gln-138 and Leu-142 each contribute to the choline site. Topologically, residues 153–157 (FGSDE) are cytoplasmic. The helical transmembrane segment at 158 to 183 (VSTACAIGVFGNQLGIAIGFLVPPVL) threads the bilayer. Residues 184 to 188 (VPNVE) lie on the Extracellular side of the membrane. Residues 189 to 218 (DMGELAEHISIMFYITAAVATLIFLLVVFV) traverse the membrane as a helical segment. The Cytoplasmic segment spans residues 219-254 (FQEKPETPPSLAQVALRNMPTGQHSYLASIARLMCN). Residues 255–285 (KPFILLLISYGLNVGSFYAVSTLLNRMIIEH) form a helical membrane-spanning segment. Tyr-272 lines the choline pocket. Over 286–289 (YPGE) the chain is Extracellular. Residues 290 to 318 (EVNAGRIGLTLVVAGVVGSLICGVWLDKT) traverse the membrane as a helical segment. The Cytoplasmic portion of the chain corresponds to 319 to 320 (KT). A helical membrane pass occupies residues 321–343 (YKQTTLSVYLLSFVGMLIYSFTL). Residues 344–346 (NLG) are Extracellular-facing. A helical transmembrane segment spans residues 347 to 376 (HLWLVFLTSGVLGFFMTGYLPLGFEFAVEL). Residues 377 to 384 (TYPESEGT) lie on the Cytoplasmic side of the membrane. The chain crosses the membrane as a helical span at residues 385–410 (SSGLLNCSAQVFGIAFTIIQGKIIDH). Residue Gln-394 participates in choline binding. Topologically, residues 411–412 (FG) are extracellular. Residues 413-435 (TLAGNIFLCVFLLIGSIMTAFIK) form a helical membrane-spanning segment. Over 436–470 (SDLRRQKANQETGGNADSSVHPQHGETLPVKEVKM) the chain is Cytoplasmic. Residues 445–456 (QETGGNADSSVH) show a composition bias toward polar residues. The segment at 445-470 (QETGGNADSSVHPQHGETLPVKEVKM) is disordered.

It belongs to the major facilitator superfamily. Feline leukemia virus subgroup C receptor (TC 2.A.1.28.1) family.

It is found in the cell membrane. Its subcellular location is the mitochondrion membrane. The protein resides in the endoplasmic reticulum membrane. The catalysed reaction is choline(out) = choline(in). It carries out the reaction ethanolamine(in) = ethanolamine(out). The enzyme catalyses heme b(in) = heme b(out). Its function is as follows. Choline uniporter that specifically mediates choline uptake at the blood-brain-barrier. Responsible for the majority of choline uptake across the blood-brain-barrier from the circulation into the brain. Choline, a nutrient critical for brain development, is a precursor of phosphatidylcholine, as well as betaine. Also mediates transport of ethanolamine. Choline and ethanolamine transport is not coupled with proton transport and is exclusively driven by the choline gradient across the plasma membrane. Also acts as a heme b transporter. The polypeptide is Choline/ethanolamine transporter flvcr2a (Danio rerio (Zebrafish)).